Here is a 101-residue protein sequence, read N- to C-terminus: NAD(P)H-quinone oxidoreductase subunit 4L, chloroplastic (101 aa).

Helical transmembrane passes span 2–22, 32–52, and 61–81; these read MLEH…YGLI, MCLE…SDFF, and IFSI…SAIV.

This sequence belongs to the complex I subunit 4L family. NDH is composed of at least 16 different subunits, 5 of which are encoded in the nucleus.

Its subcellular location is the plastid. The protein resides in the chloroplast thylakoid membrane. The enzyme catalyses a plastoquinone + NADH + (n+1) H(+)(in) = a plastoquinol + NAD(+) + n H(+)(out). It carries out the reaction a plastoquinone + NADPH + (n+1) H(+)(in) = a plastoquinol + NADP(+) + n H(+)(out). In terms of biological role, NDH shuttles electrons from NAD(P)H:plastoquinone, via FMN and iron-sulfur (Fe-S) centers, to quinones in the photosynthetic chain and possibly in a chloroplast respiratory chain. The immediate electron acceptor for the enzyme in this species is believed to be plastoquinone. Couples the redox reaction to proton translocation, and thus conserves the redox energy in a proton gradient. The polypeptide is NAD(P)H-quinone oxidoreductase subunit 4L, chloroplastic (Gossypium hirsutum (Upland cotton)).